The sequence spans 217 residues: Serine acetyltransferase (217 aa).

This sequence belongs to the transferase hexapeptide repeat family.

The protein resides in the cytoplasm. The enzyme catalyses L-serine + acetyl-CoA = O-acetyl-L-serine + CoA. It participates in amino-acid biosynthesis; L-cysteine biosynthesis; L-cysteine from L-serine: step 1/2. Inhibited by cysteine. Functionally, catalyzes the acetylation of serine by acetyl-CoA to produce O-acetylserine (OAS). The protein is Serine acetyltransferase (cysE) of Bacillus subtilis (strain 168).